The sequence spans 320 residues: Malate dehydrogenase (320 aa).

NAD(+) contacts are provided by residues 10-15 and Asp34; that span reads GSGMIG. Residues Arg83 and Arg89 each contribute to the substrate site. Residues Asn96 and 119–121 contribute to the NAD(+) site; that span reads ITN. Substrate-binding residues include Asn121 and Arg152. His176 (proton acceptor) is an active-site residue.

This sequence belongs to the LDH/MDH superfamily. MDH type 3 family.

The catalysed reaction is (S)-malate + NAD(+) = oxaloacetate + NADH + H(+). In terms of biological role, catalyzes the reversible oxidation of malate to oxaloacetate. This Brucella suis (strain ATCC 23445 / NCTC 10510) protein is Malate dehydrogenase.